The following is a 1571-amino-acid chain: MSGTFHGDGHAPMSPFEDTFQFEDNSSNEDTHIAPTHFDDGATSNKYSRPQVSFNDETPKNKREDAEEFTFNDDTEYDNHSFQPTPKLNNGSGTFDDVELDNDSGEPHTNYDGMKRFRMGTKRNKKGNPIMGRSKTLKWARKNIPNPFEDFTKDDIDPGAINRAQELRTVYYNMPLPKDMIDEEGNPIMQYPRNKIRTTKYTPLTFLPKNILFQFHNFANVYFLVLIILGAFQIFGVTNPGLSAVPLVVIVIITAIKDAIEDSRRTVLDLEVNNTKTHILEGVENENVSTDNISLWRRFKKANSRLLFKFIQYCKEHLTEEGKKKRMQRKRHELRVQKTVGTSGPRSSLDSIDSYRVSADYGRPSLDYDNLEQGAGEANIVDRSLPPRTDCKFAKNYWKGVKVGDIVRIHNNDEIPADIILLSTSDTDGACYVETKNLDGETNLKVRQSLKCTNTIRTSKDIARTKFWIESEGPHSNLYTYQGNMKWRNLADGEIRNEPITINNVLLRGCTLRNTKWAMGVVMFTGGDTKIMLNSGITPTKKSRISRELNFSVVINFVLLFILCFVSGIANGVYYDKKGRSRFSYEFGTIAGSAATNGFVSFWVAVILYQSLVPISLYISVEIIKTAQAAFIYGDVLLYNAKLDYPCTPKSWNISDDLGQVEYIFSDKTGTLTQNVMEFKKCTINGVSYGRAYTEALAGLRKRQGIDVETEGRREKAEIAKDRDTMIDELRALSGNSQFYPEEVTFVSKEFVRDLKGASGEVQQRCCEHFMLALALCHSVLVEANPDNPKKLDLKAQSPDEAALVATARDVGFSFVGKTKKGLIIEMQGIQKEFEILNILEFNSSRKRMSCIVKIPGLNPGDEPRALLICKGADSIIYSRLSRQSGSNSEAILEKTALHLEQYATEGLRTLCIAQRELSWSEYEKWNEKYDIAAASLANREDELEVVADSIERELILLGGTAIEDRLQDGVPDCIELLAEAGIKLWVLTGDKVETAINIGFSCNLLNNEMELLVIKTTGDDVKEFGSEPSEIVDALLSKYLKEYFNLTGSEEEIFEAKKDHEFPKGNYAIVIDGDALKLALYGEDIRRKFLLLCKNCRAVLCCRVSPSQKAAVVKLVKDSLDVMTLAIGDGSNDVAMIQSADVGIGIAGEEGRQAVMCSDYAIGQFRYLARLVLVHGRWSYKRLAEMIPEFFYKNMIFALALFWYGIYNDFDGSYLYEYTYMMFYNLAFTSLPVIFLGILDQDVNDTISLVVPQLYRVGILRKEWNQRKFLWYMLDGLYQSIICFFFPYLVYHKNMIVTSNGLGLDHRYFVGVYVTTIAVISCNTYVLLHQYRWDWFSGLFIALSCLVVFAWTGIWSSAIASREFFKAAARIYGAPSFWAVFFVAVLFCLLPRFTYDSFQKFFYPTDVEIVREMWQHGHFDHYPPGYDPTDPNRPKVTKAGQHGEKIIEGIALSDNLGGSNYSRDSVVTEEIPMTFMHGEDGSPSGYQKQETWMTSPKETQDLLQSPQFQQAQTFGRGPSTNVRSSLDRTREQMIATNQLDNRYSVERARTSLDLPGVTNAASLIGTQQNN.

Residues 1–94 (MSGTFHGDGH…TPKLNNGSGT (94 aa)) form a disordered region. Topologically, residues 1-214 (MSGTFHGDGH…TFLPKNILFQ (214 aa)) are cytoplasmic. Positions 29–40 (EDTHIAPTHFDD) are enriched in basic and acidic residues. Polar residues predominate over residues 42–56 (ATSNKYSRPQVSFND). A Phosphoserine modification is found at S53. A compositionally biased stretch (acidic residues) spans 66–76 (AEEFTFNDDTE). T70 carries the post-translational modification Phosphothreonine. Residues 80-93 (HSFQPTPKLNNGSG) show a composition bias toward polar residues. Phosphoserine is present on S81. A Phosphothreonine modification is found at T85. S92 is subject to Phosphoserine. T94 is subject to Phosphothreonine. S104 carries the phosphoserine modification. T109 bears the Phosphothreonine mark. The helical transmembrane segment at 215–235 (FHNFANVYFLVLIILGAFQIF) threads the bilayer. Residues 234–241 (IFGVTNPG) are involved in phosphatidylcholine substrate selection. Over 236–239 (GVTN) the chain is Extracellular. The chain crosses the membrane as a helical span at residues 240-260 (PGLSAVPLVVIVIITAIKDAI). The Cytoplasmic portion of the chain corresponds to 261-553 (EDSRRTVLDL…RISRELNFSV (293 aa)). 4 positions are modified to phosphoserine: S351, S354, S358, and S365. Y368 is subject to Phosphotyrosine. The chain crosses the membrane as a helical span at residues 554 to 574 (VINFVLLFILCFVSGIANGVY). The Extracellular segment spans residues 575-594 (YDKKGRSRFSYEFGTIAGSA). The interval 586 to 590 (EFGTI) is involved in phosphatidylcholine substrate selection. The helical transmembrane segment at 595–615 (ATNGFVSFWVAVILYQSLVPI) threads the bilayer. Residues 616-1188 (SLYISVEIIK…WSYKRLAEMI (573 aa)) are Cytoplasmic-facing. D667 serves as the catalytic 4-aspartylphosphate intermediate. ATP is bound by residues D667, K668, T669, E801, F842, S844, K847, and K871. Residue D667 participates in Mg(2+) binding. T669 is a binding site for Mg(2+). Residue K895 forms a Glycyl lysine isopeptide (Lys-Gly) (interchain with G-Cter in ubiquitin) linkage. The ATP site is built by R909, T910, T989, G990, D991, R1104, and K1110. Residue D1130 participates in Mg(2+) binding. 2 residues coordinate ATP: N1133 and D1134. D1134 is a binding site for Mg(2+). Residues 1189-1209 (PEFFYKNMIFALALFWYGIYN) traverse the membrane as a helical segment. The Extracellular segment spans residues 1210 to 1219 (DFDGSYLYEY). The helical transmembrane segment at 1220 to 1240 (TYMMFYNLAFTSLPVIFLGIL) threads the bilayer. Over 1241 to 1270 (DQDVNDTISLVVPQLYRVGILRKEWNQRKF) the chain is Cytoplasmic. Residues 1271–1291 (LWYMLDGLYQSIICFFFPYLV) form a helical membrane-spanning segment. Residues 1292–1307 (YHKNMIVTSNGLGLDH) are Extracellular-facing. The chain crosses the membrane as a helical span at residues 1308-1328 (RYFVGVYVTTIAVISCNTYVL). Over 1329–1334 (LHQYRW) the chain is Cytoplasmic. The chain crosses the membrane as a helical span at residues 1335–1355 (DWFSGLFIALSCLVVFAWTGI). Topologically, residues 1356–1375 (WSSAIASREFFKAAARIYGA) are extracellular. Residues 1376–1396 (PSFWAVFFVAVLFCLLPRFTY) traverse the membrane as a helical segment. Position 1393 (R1393) interacts with a 1,2-diacyl-sn-glycero-3-phospho-L-serine. Topologically, residues 1397-1571 (DSFQKFFYPT…ASLIGTQQNN (175 aa)) are cytoplasmic. S1506 is subject to Phosphoserine. Position 1551 is a phosphothreonine (T1551). 2 positions are modified to phosphoserine: S1552 and S1563.

This sequence belongs to the cation transport ATPase (P-type) (TC 3.A.3) family. Type IV subfamily. Component of a flippase complex consisting of DNF1 and LEM3. Interacts with LEM3; the interaction is direct and required for their mutual export from the endoplasmic reticulum. It depends on Mg(2+) as a cofactor. Phosphorylated by FPK1 and KIN82.

It localises to the cell membrane. Its subcellular location is the endosome membrane. The protein resides in the golgi apparatus. The protein localises to the trans-Golgi network membrane. It is found in the cell septum. It localises to the bud. It carries out the reaction ATP + H2O + phospholipidSide 1 = ADP + phosphate + phospholipidSide 2.. The enzyme catalyses a 1,2-diacyl-sn-glycero-3-phosphoethanolamine(out) + ATP + H2O = a 1,2-diacyl-sn-glycero-3-phosphoethanolamine(in) + ADP + phosphate + H(+). It catalyses the reaction a 1,2-diacyl-sn-glycero-3-phosphocholine(out) + ATP + H2O = a 1,2-diacyl-sn-glycero-3-phosphocholine(in) + ADP + phosphate + H(+). The catalysed reaction is a beta-D-glucosyl-(1&lt;-&gt;1')-N-acylsphing-4-enine(out) + ATP + H2O = a beta-D-glucosyl-(1&lt;-&gt;1')-N-acylsphing-4-enine(in) + ADP + phosphate + H(+). It carries out the reaction a 1,2-diacyl-sn-glycero-3-phospho-L-serine(out) + ATP + H2O = a 1,2-diacyl-sn-glycero-3-phospho-L-serine(in) + ADP + phosphate + H(+). In terms of biological role, catalytic component of a P4-ATPase flippase complex which catalyzes the hydrolysis of ATP coupled to the transport of glucosylceramide, phosphatidylcholine, phosphatidylethanolamine, and small amounts of phosphatidylserine from the lumenal to the cytosolic leaflet of the cell membrane and ensures the maintenance of asymmetric distribution of phospholipids. Does not appear to transport sphingomyelin, inositol phosphoceramide, or phosphatidic acid. Required for efficient endocytosis. The chain is Phospholipid-transporting ATPase DNF1 from Saccharomyces cerevisiae (strain ATCC 204508 / S288c) (Baker's yeast).